An 81-amino-acid polypeptide reads, in one-letter code: Photosystem I iron-sulfur center (81 aa).

4Fe-4S ferredoxin-type domains lie at 2-31 (SHSV…MVPW) and 39-68 (IASS…IRVY). The [4Fe-4S] cluster site is built by C11, C14, C17, C21, C48, C51, C54, and C58.

In terms of assembly, the G.violaceus PSI reaction center is composed of one copy each of PsaA,B,C,D,E,F,L,M and Z, and forms trimeric complexes. It depends on [4Fe-4S] cluster as a cofactor.

The protein resides in the cell inner membrane. The catalysed reaction is reduced [plastocyanin] + hnu + oxidized [2Fe-2S]-[ferredoxin] = oxidized [plastocyanin] + reduced [2Fe-2S]-[ferredoxin]. In terms of biological role, apoprotein for the two 4Fe-4S centers FA and FB of photosystem I (PSI); essential for photochemical activity. FB is the terminal electron acceptor of PSI, donating electrons to ferredoxin. The C-terminus interacts with PsaA/B/D and helps assemble the protein into the PSI complex. Required for binding of PsaD and PsaE to PSI. PSI is a plastocyanin/cytochrome c6-ferredoxin oxidoreductase, converting photonic excitation into a charge separation, which transfers an electron from the donor P700 chlorophyll pair to the spectroscopically characterized acceptors A0, A1, FX, FA and FB in turn. This is Photosystem I iron-sulfur center from Gloeobacter violaceus (strain ATCC 29082 / PCC 7421).